The primary structure comprises 211 residues: Large ribosomal subunit protein bL25 (211 aa).

This sequence belongs to the bacterial ribosomal protein bL25 family. CTC subfamily. As to quaternary structure, part of the 50S ribosomal subunit; part of the 5S rRNA/L5/L18/L25 subcomplex. Contacts the 5S rRNA. Binds to the 5S rRNA independently of L5 and L18.

Its function is as follows. This is one of the proteins that binds to the 5S RNA in the ribosome where it forms part of the central protuberance. The sequence is that of Large ribosomal subunit protein bL25 from Methylobacterium nodulans (strain LMG 21967 / CNCM I-2342 / ORS 2060).